A 236-amino-acid polypeptide reads, in one-letter code: 2-C-methyl-D-erythritol 4-phosphate cytidylyltransferase (236 aa).

This sequence belongs to the IspD/TarI cytidylyltransferase family. IspD subfamily.

The catalysed reaction is 2-C-methyl-D-erythritol 4-phosphate + CTP + H(+) = 4-CDP-2-C-methyl-D-erythritol + diphosphate. It functions in the pathway isoprenoid biosynthesis; isopentenyl diphosphate biosynthesis via DXP pathway; isopentenyl diphosphate from 1-deoxy-D-xylulose 5-phosphate: step 2/6. In terms of biological role, catalyzes the formation of 4-diphosphocytidyl-2-C-methyl-D-erythritol from CTP and 2-C-methyl-D-erythritol 4-phosphate (MEP). The protein is 2-C-methyl-D-erythritol 4-phosphate cytidylyltransferase of Burkholderia multivorans (strain ATCC 17616 / 249).